The chain runs to 753 residues: Pesticidal crystal protein Cry20Aa (753 aa).

Over residues 680 to 696 the composition is skewed to polar residues; sequence DTTYQPSYDNYNQNASG. The segment at 680–721 is disordered; it reads DTTYQPSYDNYNQNASGTYDDGYNPNASDSYDQSYTNNYSQN. A compositionally biased stretch (low complexity) spans 712-721; the sequence is QSYTNNYSQN.

The protein belongs to the delta endotoxin family. Has low mosquitocidal activity probably due to rapid proteolysis to inactive 56 kDa and 43 kDa proteins.

In terms of biological role, promotes colloidosmotic lysis by binding to the midgut epithelial cells of mosquitos. Active against Aedes aegypti and Culex quinquefasciatus larvae. The sequence is that of Pesticidal crystal protein Cry20Aa (cry20Aa) from Bacillus thuringiensis subsp. fukuokaensis.